Here is a 194-residue protein sequence, read N- to C-terminus: ATP-dependent Clp protease proteolytic subunit 3 (194 aa).

The active-site Nucleophile is the Ser-96. His-121 is a catalytic residue.

Belongs to the peptidase S14 family. As to quaternary structure, fourteen ClpP subunits assemble into 2 heptameric rings which stack back to back to give a disk-like structure with a central cavity, resembling the structure of eukaryotic proteasomes.

Its subcellular location is the cytoplasm. It carries out the reaction Hydrolysis of proteins to small peptides in the presence of ATP and magnesium. alpha-casein is the usual test substrate. In the absence of ATP, only oligopeptides shorter than five residues are hydrolyzed (such as succinyl-Leu-Tyr-|-NHMec, and Leu-Tyr-Leu-|-Tyr-Trp, in which cleavage of the -Tyr-|-Leu- and -Tyr-|-Trp bonds also occurs).. In terms of biological role, cleaves peptides in various proteins in a process that requires ATP hydrolysis. Has a chymotrypsin-like activity. Plays a major role in the degradation of misfolded proteins. The protein is ATP-dependent Clp protease proteolytic subunit 3 of Rhizobium etli (strain ATCC 51251 / DSM 11541 / JCM 21823 / NBRC 15573 / CFN 42).